The chain runs to 201 residues: MDYPEPIAKLINSYTKLPGIGPKTATRLAFYTLGMQEDDVVDFSKSLLSAKKDLTFCRICGNITENSVNPCAICQDKSRDQSTVFVVENSRDVMAMENTRDYYGLYHVLNGVISPSAGTGPEDINLPSLIRRLSDHQEINEVIVGTNANAEGEATAMYLARLLKPAGIKVTRLAHGLAVGSDIDYADQLTLIKAVQGRTEL.

Residues 57-74 form a C4-type zinc finger; it reads CRICGNITENSVNPCAIC. The region spanning 82–178 is the Toprim domain; sequence STVFVVENSR…KVTRLAHGLA (97 aa).

It belongs to the RecR family.

Its function is as follows. May play a role in DNA repair. It seems to be involved in an RecBC-independent recombinational process of DNA repair. It may act with RecF and RecO. This is Recombination protein RecR from Leuconostoc citreum (strain KM20).